A 259-amino-acid polypeptide reads, in one-letter code: Ribonuclease PH (259 aa).

Phosphate is bound by residues Arg-88 and 126–128; that span reads GTR.

This sequence belongs to the RNase PH family. In terms of assembly, homohexameric ring arranged as a trimer of dimers.

It catalyses the reaction tRNA(n+1) + phosphate = tRNA(n) + a ribonucleoside 5'-diphosphate. In terms of biological role, phosphorolytic 3'-5' exoribonuclease that plays an important role in tRNA 3'-end maturation. Removes nucleotide residues following the 3'-CCA terminus of tRNAs; can also add nucleotides to the ends of RNA molecules by using nucleoside diphosphates as substrates, but this may not be physiologically important. Probably plays a role in initiation of 16S rRNA degradation (leading to ribosome degradation) during starvation. In Mycolicibacterium smegmatis (strain ATCC 700084 / mc(2)155) (Mycobacterium smegmatis), this protein is Ribonuclease PH.